The sequence spans 250 residues: Probable fimbrial chaperone YfcS (250 aa).

Positions 1 to 28 (MSDLLCSAKLGAMTLALLLSATSLSALA) are cleaved as a signal peptide.

It belongs to the periplasmic pilus chaperone family.

Its subcellular location is the periplasm. In terms of biological role, part of the yfcOPQRSUV fimbrial operon. Could contribute to adhesion to various surfaces in specific environmental niches. Increases adhesion to eukaryotic T24 bladder epithelial cells in the absence of fim genes. In Escherichia coli (strain K12), this protein is Probable fimbrial chaperone YfcS (yfcS).